The chain runs to 295 residues: bZIP transcription factor RISBZ5 (295 aa).

Residues 16–26 show a composition bias toward basic and acidic residues; the sequence is REEAGAGDRKP. The interval 16 to 157 is disordered; that stretch reads REEAGAGDRK…ARRSRRRKQA (142 aa). The span at 109-119 shows a compositional bias: acidic residues; that stretch reads SDSDSDCDSLL. Basic and acidic residues predominate over residues 120–136; that stretch reads EAERSPRLRGTKSTETK. A bZIP domain is found at 134-197; that stretch reads ETKRIRRMVS…NTAVTDNRIL (64 aa). The basic motif stretch occupies residues 136–155; it reads KRIRRMVSNRESARRSRRRK. The segment at 162–176 is leucine-zipper; the sequence is LESQVEQLKGENSSL.

As to quaternary structure, homodimer.

The protein localises to the nucleus. Probable transcription factor that binds to the DNA specific sequence 5'-TGAGTCA-3' found in seed storage protein gene promoters. May function as a negative regulator in cold and drought stress responses. The protein is bZIP transcription factor RISBZ5 of Oryza sativa subsp. japonica (Rice).